Here is an 86-residue protein sequence, read N- to C-terminus: Small ribosomal subunit protein bS16c (86 aa).

It belongs to the bacterial ribosomal protein bS16 family.

The protein resides in the plastid. It localises to the chloroplast. The polypeptide is Small ribosomal subunit protein bS16c (Liriodendron tulipifera (Tuliptree)).